Here is a 203-residue protein sequence, read N- to C-terminus: RNA chaperone ProQ (203 aa).

Positions 111-138 are disordered; the sequence is KAKRQALAPKKPAKKVAPKRAPAVKKER.

Belongs to the ProQ family.

The protein resides in the cytoplasm. RNA chaperone with significant RNA binding, RNA strand exchange and RNA duplexing activities. The protein is RNA chaperone ProQ of Shewanella frigidimarina (strain NCIMB 400).